The chain runs to 105 residues: Flower-specific defensin (105 aa).

An N-terminal signal peptide occupies residues 1–25; the sequence is MARSLCFMAFAILAMMLFVAYEVQA. Disulfide bonds link C28–C72, C39–C59, C45–C66, and C49–C68. Residues 73–105 constitute a propeptide, removed in mature form; it reads VFDEKMTKTGAEILAEEAKTLAAALLEEEIMDN.

Belongs to the DEFL family. In terms of tissue distribution, most abundant in the epidermal cell layers of the petals and sepals, within the connective cells of the anthers, and the cortical cells of the style. Not detected in the tapetum, pollen mother cells, the transmitting tissue, the vascular bundles of the anther and style or in leaves. Expressed also in ovaries, but barley detectable in roots.

Its subcellular location is the secreted. It localises to the vacuole. Plant defense peptide with antifungal activity against F.oxysporum and B.cinerea. Retards the growth of the Lepidopteran insect pests H.armigera and H.punctigera. This is Flower-specific defensin (D1) from Nicotiana alata (Winged tobacco).